We begin with the raw amino-acid sequence, 381 residues long: Estradiol 17-beta-dehydrogenase 2 (381 aa).

The chain crosses the membrane as a helical; Signal-anchor for type II membrane protein span at residues 4–24 (FSSESAWLCLTATAVLGGMLL). 83–112 (QKAVLVTGADSGFGHALAKHLDKLGFTVFA) is a binding site for NAD(+). Ser-220 serves as a coordination point for substrate. Catalysis depends on Tyr-233, which acts as the Proton acceptor.

The protein belongs to the short-chain dehydrogenases/reductases (SDR) family. As to quaternary structure, homodimer. Highly expressed in the placenta, and in the small intestine, and liver.

It is found in the endoplasmic reticulum membrane. The catalysed reaction is 17beta-estradiol + NAD(+) = estrone + NADH + H(+). It catalyses the reaction testosterone + NAD(+) = androst-4-ene-3,17-dione + NADH + H(+). The enzyme catalyses 17beta-hydroxy-5alpha-androstan-3-one + NAD(+) = 5alpha-androstan-3,17-dione + NADH + H(+). It carries out the reaction (20S)-hydroxypregn-4-en-3-one + NAD(+) = progesterone + NADH + H(+). Its function is as follows. Catalyzes the NAD-dependent oxidation of highly active 17beta-hydroxysteroids, such as estradiol (E2), testosterone (T), and dihydrotestosterone (DHT), to their less active forms and thus regulates the biological potency of these steroids. Oxidizes estradiol to estrone, testosterone to androstenedione, and dihydrotestosterone to 5alpha-androstan-3,17-dione. Also has 20-alpha-HSD activity. The protein is Estradiol 17-beta-dehydrogenase 2 (Hsd17b2) of Rattus norvegicus (Rat).